We begin with the raw amino-acid sequence, 307 residues long: Deaminated glutathione amidase, chloroplastic/cytosolic (307 aa).

The transit peptide at 1–36 directs the protein to the chloroplast; it reads MNAYSVSLDFTKPSLFTRITLSSQIPLTMATTVNKT. One can recognise a CN hydrolase domain in the interval 37–286; it reads VRVAAAQMTS…TGIVVADIDF (250 aa). Glutamate 76 serves as the catalytic Proton acceptor. Lysine 147 (proton donor) is an active-site residue. Cysteine 188 (nucleophile) is an active-site residue.

Belongs to the nitrilase superfamily. NIT1/NIT2 family.

Its subcellular location is the plastid. It is found in the chloroplast. The protein localises to the cytoplasm. The enzyme catalyses N-(4-oxoglutaryl)-L-cysteinylglycine + H2O = L-cysteinylglycine + 2-oxoglutarate. It carries out the reaction N-(4-carboxy-4-oxobutanoyl)-L-ethylglycylglycine + H2O = N-(2-aminobutanoyl)glycine + 2-oxoglutarate. Its function is as follows. Catalyzes the hydrolysis of the amide bond in N-(4-oxoglutarate)-L-cysteinylglycine (deaminated glutathione), a metabolite repair reaction to dispose of the harmful deaminated glutathione. Possesses amidase activity toward deaminated ophthalmate in vitro. The sequence is that of Deaminated glutathione amidase, chloroplastic/cytosolic from Arabidopsis thaliana (Mouse-ear cress).